The following is a 367-amino-acid chain: 2-aminoethylphosphonate--pyruvate transaminase (367 aa).

Residue Lys194 is modified to N6-(pyridoxal phosphate)lysine.

The protein belongs to the class-V pyridoxal-phosphate-dependent aminotransferase family. PhnW subfamily. In terms of assembly, homodimer. Requires pyridoxal 5'-phosphate as cofactor.

The catalysed reaction is (2-aminoethyl)phosphonate + pyruvate = phosphonoacetaldehyde + L-alanine. Functionally, involved in phosphonate degradation. This is 2-aminoethylphosphonate--pyruvate transaminase from Salmonella gallinarum (strain 287/91 / NCTC 13346).